The following is a 310-amino-acid chain: Protoheme IX farnesyltransferase (310 aa).

9 helical membrane-spanning segments follow: residues 37 to 57 (LITV…DVLL), 64 to 84 (LTLL…CYLN), 113 to 133 (ILAL…IVNH), 134 to 154 (VAAV…TMWL), 159 to 181 (TINT…AAVT), 186 to 208 (IDAW…ALAM), 215 to 237 (RAAG…QIVW), 257 to 277 (MLVM…GLKI), and 290 to 310 (MFFF…LVSL).

It belongs to the UbiA prenyltransferase family. Protoheme IX farnesyltransferase subfamily. In terms of assembly, interacts with CtaA.

It is found in the cell membrane. It catalyses the reaction heme b + (2E,6E)-farnesyl diphosphate + H2O = Fe(II)-heme o + diphosphate. It participates in porphyrin-containing compound metabolism; heme O biosynthesis; heme O from protoheme: step 1/1. In terms of biological role, converts heme B (protoheme IX) to heme O by substitution of the vinyl group on carbon 2 of heme B porphyrin ring with a hydroxyethyl farnesyl side group. This Exiguobacterium sibiricum (strain DSM 17290 / CCUG 55495 / CIP 109462 / JCM 13490 / 255-15) protein is Protoheme IX farnesyltransferase.